The chain runs to 341 residues: DnaJ homolog subfamily C member 22 (341 aa).

Residues 4–50 (GLLMTYALWAFGGPVGLHHLYLGRDSHALLWMLTLGGGGLGWLWEFW) form the TM2 domain. 7 helical membrane passes run 5 to 25 (LLMT…HLYL), 30 to 50 (HALL…WEFW), 81 to 101 (FASQ…SLSS), 105 to 125 (FYIV…AAVG), 135 to 155 (LGAA…ILPI), 185 to 205 (VGLA…YNTA), and 232 to 252 (VESV…APGF). One can recognise a J domain in the interval 277–341 (LAHQVLGIPE…QPKKPRASWR (65 aa)).

Its subcellular location is the membrane. In terms of biological role, may function as a co-chaperone. This chain is DnaJ homolog subfamily C member 22 (Dnajc22), found in Rattus norvegicus (Rat).